A 247-amino-acid chain; its full sequence is MNGRADFREPNAQVSRPIPDIGGGYIPTEEEWRLFAECHEECFWFRSVPLAATSMLITQGLISKGILSSHPKYGSIPKLLFACIVGYFAGKLSYVKTCQEKFKKLENSPLGEALRSGELRRSSPPGHYTQKPKFDSNVSGQSSFGTSPAADNIEKEALPRYEPIPFSASMNESTPTGITDHIAQGPEPNLEESPKRKGVTYEELRSKNRESYGVTLPHKTDPSVRPMQERVPKKEVKVNKYGDTWDE.

Residues M1–E112 enclose the OCIA domain. Phosphoserine is present on residues S108, S116, and S123. 2 disordered regions span residues A113–I153 and S167–R230. Composition is skewed to polar residues over residues S136–T146 and A168–G177. Composition is skewed to basic and acidic residues over residues E192–E210 and H218–R230. S193 carries the phosphoserine modification.

The protein belongs to the OCIAD1 family. In terms of assembly, interacts with OCIAD2. Interacts with STAT3. In terms of tissue distribution, expressed at high levels in the brain and at lower levels in the heart, ovary, testis and kidney. Expression is strongest in embryonic stem cells and in the blood vessels.

It is found in the endosome. Maintains stem cell potency. Increases STAT3 phosphorylation and controls ERK phosphorylation. May act as a scaffold, increasing STAT3 recruitment onto endosomes. In Mus musculus (Mouse), this protein is OCIA domain-containing protein 1.